Here is a 342-residue protein sequence, read N- to C-terminus: Nicotinate-nucleotide--dimethylbenzimidazole phosphoribosyltransferase (342 aa).

E311 acts as the Proton acceptor in catalysis.

It belongs to the CobT family.

The catalysed reaction is 5,6-dimethylbenzimidazole + nicotinate beta-D-ribonucleotide = alpha-ribazole 5'-phosphate + nicotinate + H(+). It participates in nucleoside biosynthesis; alpha-ribazole biosynthesis; alpha-ribazole from 5,6-dimethylbenzimidazole: step 1/2. Catalyzes the synthesis of alpha-ribazole-5'-phosphate from nicotinate mononucleotide (NAMN) and 5,6-dimethylbenzimidazole (DMB). The sequence is that of Nicotinate-nucleotide--dimethylbenzimidazole phosphoribosyltransferase from Vibrio atlanticus (strain LGP32) (Vibrio splendidus (strain Mel32)).